The following is a 110-amino-acid chain: Large ribosomal subunit protein uL22 (110 aa).

The protein belongs to the universal ribosomal protein uL22 family. In terms of assembly, part of the 50S ribosomal subunit.

Its function is as follows. This protein binds specifically to 23S rRNA; its binding is stimulated by other ribosomal proteins, e.g. L4, L17, and L20. It is important during the early stages of 50S assembly. It makes multiple contacts with different domains of the 23S rRNA in the assembled 50S subunit and ribosome. The globular domain of the protein is located near the polypeptide exit tunnel on the outside of the subunit, while an extended beta-hairpin is found that lines the wall of the exit tunnel in the center of the 70S ribosome. The chain is Large ribosomal subunit protein uL22 from Chromohalobacter salexigens (strain ATCC BAA-138 / DSM 3043 / CIP 106854 / NCIMB 13768 / 1H11).